We begin with the raw amino-acid sequence, 379 residues long: Structure-specific endonuclease subunit EME2 (379 aa).

Residues 1 to 55 (MARVGPGRAGVSCQGRGRGRGGSGQRRPPTWEISDSDAEDSAGSEAAARARDPAG) are disordered. A nuclease-like domain; forms the post-nick DNA binding interface and is involved in DNA recognition and bending region spans residues 50-266 (ARDPAGERRA…YPLKQYRESQ (217 aa)). Residues 288-379 (GLQAAWRRQI…NPDLLLDLGS (92 aa)) form a helix-hairpin-helix (2HhH); forms the pre-nick DNA binding interface and is involved in DNA recognition and bending region.

The protein belongs to the EME1/MMS4 family. As to quaternary structure, part of the heterodimeric MUS81-EME2 complex; the complex forms specifically during the DNA replication phase of the cell cycle.

It is found in the nucleus. Non-catalytic subunit of the structure-specific, heterodimeric DNA endonuclease MUS81-EME2 which is involved in the maintenance of genome stability. In the complex, EME2 is required for DNA cleavage, participating in DNA recognition and bending. MUS81-EME2 cleaves 3'-flaps and nicked Holliday junctions, and exhibit limited endonuclease activity with 5' flaps and nicked double-stranded DNAs. MUS81-EME2 which is active during the replication of DNA is more specifically involved in replication fork processing. Replication forks frequently encounter obstacles to their passage, including DNA base lesions, DNA interstrand cross-links, difficult-to-replicate sequences, transcription bubbles, or tightly bound proteins. One mechanism for the restart of a stalled replication fork involves nucleolytic cleavage mediated by the MUS81-EME2 endonuclease. By acting upon the stalled fork, MUS81-EME2 generates a DNA double-strand break (DSB) that can be repaired by homologous recombination, leading to the restoration of an active fork. MUS81-EME2 could also function in telomere maintenance. The polypeptide is Structure-specific endonuclease subunit EME2 (Homo sapiens (Human)).